A 492-amino-acid polypeptide reads, in one-letter code: N-succinylglutamate 5-semialdehyde dehydrogenase (492 aa).

220–225 lines the NAD(+) pocket; that stretch reads GSASTG. Residues glutamate 243 and cysteine 277 contribute to the active site.

This sequence belongs to the aldehyde dehydrogenase family. AstD subfamily.

It catalyses the reaction N-succinyl-L-glutamate 5-semialdehyde + NAD(+) + H2O = N-succinyl-L-glutamate + NADH + 2 H(+). It functions in the pathway amino-acid degradation; L-arginine degradation via AST pathway; L-glutamate and succinate from L-arginine: step 4/5. Its function is as follows. Catalyzes the NAD-dependent reduction of succinylglutamate semialdehyde into succinylglutamate. In Salmonella paratyphi A (strain AKU_12601), this protein is N-succinylglutamate 5-semialdehyde dehydrogenase.